Here is a 262-residue protein sequence, read N- to C-terminus: tRNA pseudouridine synthase A (262 aa).

Asp-51 serves as the catalytic Nucleophile. Tyr-106 lines the substrate pocket.

This sequence belongs to the tRNA pseudouridine synthase TruA family.

The enzyme catalyses uridine(38/39/40) in tRNA = pseudouridine(38/39/40) in tRNA. Formation of pseudouridine at positions 38, 39 and 40 in the anticodon stem and loop of transfer RNAs. This Pyrococcus horikoshii (strain ATCC 700860 / DSM 12428 / JCM 9974 / NBRC 100139 / OT-3) protein is tRNA pseudouridine synthase A.